Here is a 206-residue protein sequence, read N- to C-terminus: Flavin prenyltransferase UbiX (206 aa).

Residues 14–16 (GAS), threonine 40, 101–104 (SMGT), and arginine 136 contribute to the FMN site. Residues tyrosine 166 and lysine 182 each contribute to the dimethylallyl phosphate site.

Belongs to the UbiX/PAD1 family.

It carries out the reaction dimethylallyl phosphate + FMNH2 = prenylated FMNH2 + phosphate. In terms of biological role, flavin prenyltransferase that catalyzes the synthesis of the prenylated FMN cofactor (prenyl-FMN) for 4-hydroxy-3-polyprenylbenzoic acid decarboxylase UbiD. The prenyltransferase is metal-independent and links a dimethylallyl moiety from dimethylallyl monophosphate (DMAP) to the flavin N5 and C6 atoms of FMN. The chain is Flavin prenyltransferase UbiX from Halalkalibacterium halodurans (strain ATCC BAA-125 / DSM 18197 / FERM 7344 / JCM 9153 / C-125) (Bacillus halodurans).